The following is a 274-amino-acid chain: Thiamine kinase (274 aa).

It belongs to the thiamine kinase family.

It carries out the reaction thiamine + ATP = thiamine phosphate + ADP + H(+). Its pathway is cofactor biosynthesis; thiamine diphosphate biosynthesis; thiamine phosphate from thiamine: step 1/1. In terms of biological role, catalyzes the ATP-dependent phosphorylation of thiamine to thiamine phosphate. Is involved in thiamine salvage. In Escherichia coli O157:H7 (strain EC4115 / EHEC), this protein is Thiamine kinase.